A 163-amino-acid polypeptide reads, in one-letter code: Large ribosomal subunit protein uL10 (163 aa).

Belongs to the universal ribosomal protein uL10 family. As to quaternary structure, part of the ribosomal stalk of the 50S ribosomal subunit. The N-terminus interacts with L11 and the large rRNA to form the base of the stalk. The C-terminus forms an elongated spine to which L12 dimers bind in a sequential fashion forming a multimeric L10(L12)X complex.

Forms part of the ribosomal stalk, playing a central role in the interaction of the ribosome with GTP-bound translation factors. This is Large ribosomal subunit protein uL10 from Mannheimia succiniciproducens (strain KCTC 0769BP / MBEL55E).